The primary structure comprises 285 residues: Seipin (285 aa).

Over 1-16 (MKINVSRPLQFLQWSS) the chain is Cytoplasmic. Residues 17-37 (YIVVAFLIQLLIILPLSILIY) traverse the membrane as a helical segment. Topologically, residues 38-244 (HDFYLRLLPA…GLRNLMLRKR (207 aa)) are lumenal. The helical transmembrane segment at 245–265 (FLSYIIGISIFHCIICVLFFI) threads the bilayer. Topologically, residues 266-285 (TGCTAFIFVRKGQEKSKKHS) are cytoplasmic.

It belongs to the seipin family.

It is found in the endoplasmic reticulum membrane. In terms of biological role, involved in lipid metabolism and lipid droplet (LD) morphology, number, and size. Facilitates initiation of LD formation, and ensures that vectorial budding of LDs from the ER is directed towards the cytoplasm. The sequence is that of Seipin from Saccharomyces cerevisiae (strain ATCC 204508 / S288c) (Baker's yeast).